The primary structure comprises 233 residues: uncharacterized protein (233 aa).

The 69-residue stretch at 16-84 folds into the HTH gntR-type domain; the sequence is KTLAKQVIER…TRGGTYFNDK (69 aa). The segment at residues 44–63 is a DNA-binding region (H-T-H motif); sequence EMELMDILHVSRPVLREALS.

This is an uncharacterized protein from Bacillus subtilis (strain 168).